The primary structure comprises 218 residues: Protein-L-isoaspartate O-methyltransferase (218 aa).

S60 is a catalytic residue.

This sequence belongs to the methyltransferase superfamily. L-isoaspartyl/D-aspartyl protein methyltransferase family.

It is found in the cytoplasm. It carries out the reaction [protein]-L-isoaspartate + S-adenosyl-L-methionine = [protein]-L-isoaspartate alpha-methyl ester + S-adenosyl-L-homocysteine. Its function is as follows. Catalyzes the methyl esterification of L-isoaspartyl residues in peptides and proteins that result from spontaneous decomposition of normal L-aspartyl and L-asparaginyl residues. It plays a role in the repair and/or degradation of damaged proteins. This is Protein-L-isoaspartate O-methyltransferase from Roseiflexus sp. (strain RS-1).